We begin with the raw amino-acid sequence, 609 residues long: UvrABC system protein C (609 aa).

One can recognise a GIY-YIG domain in the interval 16 to 94; the sequence is HLPGVYRHLD…IKSLRPRYNI (79 aa). A UVR domain is found at 203–238; it reads REVMDEIEARMLQASTELRFEEAAVLRDQMGSLSKV.

This sequence belongs to the UvrC family. In terms of assembly, interacts with UvrB in an incision complex.

The protein localises to the cytoplasm. In terms of biological role, the UvrABC repair system catalyzes the recognition and processing of DNA lesions. UvrC both incises the 5' and 3' sides of the lesion. The N-terminal half is responsible for the 3' incision and the C-terminal half is responsible for the 5' incision. This Bordetella pertussis (strain Tohama I / ATCC BAA-589 / NCTC 13251) protein is UvrABC system protein C.